Reading from the N-terminus, the 696-residue chain is Interleukin-1 receptor accessory protein-like 1 (696 aa).

Positions 1–18 are cleaved as a signal peptide; it reads MKAPIPHLILLYATFTQS. Positions 19 to 134 constitute an Ig-like 1 domain; it reads LKVVTKRGSA…YCMKVSISLT (116 aa). Residues 19-357 lie on the Extracellular side of the membrane; that stretch reads LKVVTKRGSA…LLHKRELMYT (339 aa). 2 cysteine pairs are disulfide-bonded: cysteine 31/cysteine 126 and cysteine 53/cysteine 118. Residues asparagine 63, asparagine 122, and asparagine 138 are each glycosylated (N-linked (GlcNAc...) asparagine). Intrachain disulfides connect cysteine 143-cysteine 185 and cysteine 164-cysteine 216. Ig-like domains follow at residues 143–232 and 242–350; these read CYNS…TELT and PKLL…VLLH. N-linked (GlcNAc...) asparagine glycosylation is found at asparagine 213, asparagine 264, and asparagine 331. The cysteines at positions 267 and 334 are disulfide-linked. Residues 358–378 traverse the membrane as a helical segment; that stretch reads VELAGGLGAILLLLVCLVTIY. Topologically, residues 379–696 are cytoplasmic; that stretch reads KCYKIEIMLF…RETSISSVIW (318 aa). The 157-residue stretch at 403 to 559 folds into the TIR domain; it reads KDYDAYLSYT…KFWKRLQYEM (157 aa). Glutamate 491 is a catalytic residue. Residues 549 to 644 are interaction with NCS1; the sequence is SKFWKRLQYE…TGTLPLTSIG (96 aa). A disordered region spans residues 659–680; that stretch reads GQRPQTKSSREQNPDEAHTNSA. The span at 666–676 shows a compositional bias: basic and acidic residues; that stretch reads SSREQNPDEAH.

This sequence belongs to the interleukin-1 receptor family. As to quaternary structure, homodimer. Interacts (calcium-independent) with NCS1/FREQ. Interacts (via the first immunoglobilin domain) with PTPRD (via the second immunoglobilin domain); this interaction is PTPRD-splicing-dependent and induces pre- and post-synaptic differentiation of neurons and is required for IL1RAPL1-mediated synapse formation.

Its subcellular location is the cell membrane. The protein localises to the cytoplasm. It is found in the cell projection. It localises to the axon. The protein resides in the dendrite. The enzyme catalyses NAD(+) + H2O = ADP-D-ribose + nicotinamide + H(+). Functionally, may regulate secretion and presynaptic differentiation through inhibition of the activity of N-type voltage-gated calcium channel. May activate the MAP kinase JNK. Plays a role in neurite outgrowth. During dendritic spine formation can bidirectionally induce pre- and post-synaptic differentiation of neurons by trans-synaptically binding to PTPRD. This chain is Interleukin-1 receptor accessory protein-like 1 (IL1RAPL1), found in Pongo pygmaeus (Bornean orangutan).